We begin with the raw amino-acid sequence, 212 residues long: N-acetyltransferase 9-like protein (212 aa).

In terms of domain architecture, N-acetyltransferase spans 34–201; that stretch reads EEIREQTASE…INLLNLKNND (168 aa).

Belongs to the acetyltransferase family. GNAT subfamily.

The sequence is that of N-acetyltransferase 9-like protein (nat9) from Dictyostelium discoideum (Social amoeba).